A 166-amino-acid chain; its full sequence is Ribosome maturation factor RimP (166 aa).

Belongs to the RimP family.

It localises to the cytoplasm. In terms of biological role, required for maturation of 30S ribosomal subunits. The sequence is that of Ribosome maturation factor RimP from Paramagnetospirillum magneticum (strain ATCC 700264 / AMB-1) (Magnetospirillum magneticum).